The primary structure comprises 119 residues: Ribonuclease P protein component (119 aa).

It belongs to the RnpA family. In terms of assembly, consists of a catalytic RNA component (M1 or rnpB) and a protein subunit.

The enzyme catalyses Endonucleolytic cleavage of RNA, removing 5'-extranucleotides from tRNA precursor.. Its function is as follows. RNaseP catalyzes the removal of the 5'-leader sequence from pre-tRNA to produce the mature 5'-terminus. It can also cleave other RNA substrates such as 4.5S RNA. The protein component plays an auxiliary but essential role in vivo by binding to the 5'-leader sequence and broadening the substrate specificity of the ribozyme. This Listeria welshimeri serovar 6b (strain ATCC 35897 / DSM 20650 / CCUG 15529 / CIP 8149 / NCTC 11857 / SLCC 5334 / V8) protein is Ribonuclease P protein component.